A 757-amino-acid chain; its full sequence is uncharacterized protein (757 aa).

This is an uncharacterized protein from Dictyostelium discoideum (Social amoeba).